The chain runs to 326 residues: Adenosine receptor A1 (326 aa).

Residues 1–10 lie on the Extracellular side of the membrane; the sequence is MPPSISAFQA. The chain crosses the membrane as a helical span at residues 11–33; sequence AYIGIEVLIALVSVPGNVLVIWA. At 34-46 the chain is on the cytoplasmic side; sequence VKVNQALRDATFC. Residues 47-69 traverse the membrane as a helical segment; the sequence is FIVSLAVADVAVGALVIPLAILI. Topologically, residues 70–80 are extracellular; it reads NIGPRTYFHTC. Residues Cys-80 and Cys-169 are joined by a disulfide bond. A helical membrane pass occupies residues 81-102; sequence LKVACPVLILTQSSILALLAIA. Residues 103 to 123 are Cytoplasmic-facing; the sequence is VDRYLRVKIPLRYKTVVTPRR. A helical transmembrane segment spans residues 124–146; the sequence is AVVAITGCWILSFVVGLTPMFGW. Over 147–176 the chain is Extracellular; sequence NNLSAVERDWLANGSVGEPVIECQFEKVIS. Residues Asn-148 and Asn-159 are each glycosylated (N-linked (GlcNAc...) asparagine). Residues 177–201 traverse the membrane as a helical segment; sequence MEYMVYFNFFVWVLPPLLLMVLIYM. Topologically, residues 202 to 235 are cytoplasmic; that stretch reads EVFYLIRKQLNKKVSASSGDPQKYYGKELKIAKS. The helical transmembrane segment at 236–259 threads the bilayer; that stretch reads LALILFLFALSWLPLHILNCITLF. Residues 260–267 lie on the Extracellular side of the membrane; that stretch reads CPSCHMPR. The helical transmembrane segment at 268-292 threads the bilayer; it reads ILIYIAIFLSHGNSAMNPIVYAFRI. The Cytoplasmic segment spans residues 293 to 326; the sequence is QKFRVTFLKIWNDHFRCQPAPPVDEDAPAERPDD. Cys-309 is lipidated: S-palmitoyl cysteine.

It belongs to the G-protein coupled receptor 1 family.

It localises to the cell membrane. Its function is as follows. Receptor for adenosine. The activity of this receptor is mediated by G proteins which inhibit adenylyl cyclase. This is Adenosine receptor A1 (ADORA1) from Bos taurus (Bovine).